A 267-amino-acid chain; its full sequence is Membrane-associated protein Vipp1 (267 aa).

The stretch at 26–156 forms a coiled coil; it reads EKVLEQAVID…KANAELQQTL (131 aa). A disordered region spans residues 224-252; that stretch reads GTSAATPQLEAAPVDSSVPANNASQDDAV.

Belongs to the PspA/Vipp/IM30 family.

It is found in the cell inner membrane. Required for thylakoid formation. In Synechocystis sp. (strain ATCC 27184 / PCC 6803 / Kazusa), this protein is Membrane-associated protein Vipp1.